The primary structure comprises 242 residues: Small ribosomal subunit protein uS2 (242 aa).

This sequence belongs to the universal ribosomal protein uS2 family.

The chain is Small ribosomal subunit protein uS2 from Aliivibrio fischeri (strain ATCC 700601 / ES114) (Vibrio fischeri).